Here is a 584-residue protein sequence, read N- to C-terminus: Protein spire homolog 1 (584 aa).

The disordered stretch occupies residues 1–30; sequence MANTVEADGSNDEGYEAAEEGPEDEEDEKR. The region spanning 1 to 73 is the KIND domain; sequence MANTVEADGS…RALFAETMEL (73 aa). Residues 9–28 are compositionally biased toward acidic residues; that stretch reads GSNDEGYEAAEEGPEDEEDE. The stretch at 71–99 forms a coiled coil; sequence MELHTFLAKVKSAKENLKKIQEMEKSDES. WH2 domains follow at residues 147 to 165 and 211 to 228; these read PYEM…LRKV and LHER…LRPV. Positions 224 to 238 are enriched in basic and acidic residues; sequence KLRPVSPEEIRRSRL. A disordered region spans residues 224–366; sequence KLRPVSPEEI…PTNVRQFLPP (143 aa). At S229 the chain carries Phosphoserine. Residues 242-272 are compositionally biased toward polar residues; that stretch reads TPESTKNLMESSMVNGGLTSQTKENGLSSAE. Phosphoserine is present on residues S292, S293, and S295. Residues 302 to 320 are compositionally biased toward low complexity; it reads KSTSSSSVSPSFPEEPVLE. At T337 the chain carries Phosphothreonine. Basic and acidic residues predominate over residues 340–356; the sequence is PERRQPPQRRHSIEKET. A compositionally biased stretch (polar residues) spans 357–366; the sequence is PTNVRQFLPP. The spir-box stretch occupies residues 384–404; the sequence is LALTVEEVMHIRQVLVKAELE. A phosphoserine mark is found at S506, S510, and S563.

It belongs to the spire family. As to quaternary structure, interacts with FMN2.

It localises to the cytoplasm. The protein resides in the cytoskeleton. It is found in the cytosol. The protein localises to the cleavage furrow. Its subcellular location is the perinuclear region. It localises to the cell membrane. The protein resides in the cytoplasmic vesicle membrane. Its function is as follows. Acts as an actin nucleation factor, remains associated with the slow-growing pointed end of the new filament. Involved in intracellular vesicle transport along actin fibers, providing a novel link between actin cytoskeleton dynamics and intracellular transport. Required for asymmetric spindle positioning and asymmetric cell division during meiosis. Required for normal formation of the cleavage furrow and for polar body extrusion during female germ cell meiosis. Also acts in the nucleus: together with FMN2, promotes assembly of nuclear actin filaments in response to DNA damage in order to facilitate movement of chromatin and repair factors after DNA damage. In addition, promotes innate immune signaling downstream of dsRNA sensing. Mechanistically, contributes to IRF3 phosphorylation and activation downstream of MAVS and upstream of TBK1. The sequence is that of Protein spire homolog 1 (SPIRE1) from Macaca fascicularis (Crab-eating macaque).